A 310-amino-acid polypeptide reads, in one-letter code: Glycine--tRNA ligase alpha subunit (310 aa).

It belongs to the class-II aminoacyl-tRNA synthetase family. Tetramer of two alpha and two beta subunits.

Its subcellular location is the cytoplasm. It catalyses the reaction tRNA(Gly) + glycine + ATP = glycyl-tRNA(Gly) + AMP + diphosphate. This Aliivibrio salmonicida (strain LFI1238) (Vibrio salmonicida (strain LFI1238)) protein is Glycine--tRNA ligase alpha subunit.